Consider the following 102-residue polypeptide: uncharacterized protein (102 aa).

A disordered region spans residues 1-41; that stretch reads MAAPRQIAFYGKGGTGKPKRKPEPVTASKEDRCLGSPSKNK.

To the N-terminal of nitrogenase iron protein (NifH). Has lost the ATP-binding site.

Its function is as follows. This protein is either not expressed, expressed at low levels or rapidly degraded. This is an uncharacterized protein from Rhizobium meliloti (Ensifer meliloti).